A 608-amino-acid polypeptide reads, in one-letter code: Phosphogluconate dehydratase (608 aa).

2 residues coordinate [4Fe-4S] cluster: cysteine 154 and cysteine 221.

The protein belongs to the IlvD/Edd family. [4Fe-4S] cluster is required as a cofactor.

It carries out the reaction 6-phospho-D-gluconate = 2-dehydro-3-deoxy-6-phospho-D-gluconate + H2O. It participates in carbohydrate metabolism; Entner-Doudoroff pathway. Its function is as follows. Catalyzes the dehydration of 6-phospho-D-gluconate to 2-dehydro-3-deoxy-6-phospho-D-gluconate. This is Phosphogluconate dehydratase from Helicobacter pylori (strain ATCC 700392 / 26695) (Campylobacter pylori).